We begin with the raw amino-acid sequence, 122 residues long: Insulin-like growth factor 1 (122 aa).

Residues 49–77 are b; it reads GPETLCGAELVDALQFVCGDRGFYFNKPT. 3 disulfides stabilise this stretch: Cys-54–Cys-96, Cys-66–Cys-109, and Cys-95–Cys-100. The segment at 78–89 is c; that stretch reads GYGSSSRRAPQT. The interval 90-110 is a; the sequence is GIVDECCFRSCDLRRLEMYCA. The interval 111 to 118 is d; the sequence is PLKPAKSA. A propeptide spans 119-122 (e peptide); sequence RSVR.

Belongs to the insulin family. As to quaternary structure, forms a ternary complex with IGFR1 and ITGAV:ITGB3. Forms a ternary complex with IGFR1 and ITGA6:ITGB4. Forms a ternary complex with IGFBP3 and ALS.

The protein localises to the secreted. The insulin-like growth factors, isolated from plasma, are structurally and functionally related to insulin but have a much higher growth-promoting activity. May be a physiological regulator of [1-14C]-2-deoxy-D-glucose (2DG) transport and glycogen synthesis in osteoblasts. Stimulates glucose transport in bone-derived osteoblastic (PyMS) cells and is effective at much lower concentrations than insulin, not only regarding glycogen and DNA synthesis but also with regard to enhancing glucose uptake. May play a role in synapse maturation. Ca(2+)-dependent exocytosis of IGF1 is required for sensory perception of smell in the olfactory bulb. Acts as a ligand for IGF1R. Binds to the alpha subunit of IGF1R, leading to the activation of the intrinsic tyrosine kinase activity which autophosphorylates tyrosine residues in the beta subunit thus initiating a cascade of down-stream signaling events leading to activation of the PI3K-AKT/PKB and the Ras-MAPK pathways. Binds to integrins ITGAV:ITGB3 and ITGA6:ITGB4. Its binding to integrins and subsequent ternary complex formation with integrins and IGFR1 are essential for IGF1 signaling. Induces the phosphorylation and activation of IGFR1, MAPK3/ERK1, MAPK1/ERK2 and AKT1. As part of the MAPK/ERK signaling pathway, acts as a negative regulator of apoptosis in cardiomyocytes via promotion of STUB1/CHIP-mediated ubiquitination and degradation of ICER-type isoforms of CREM. The protein is Insulin-like growth factor 1 of Equus caballus (Horse).